Consider the following 720-residue polypeptide: Catalase-peroxidase (720 aa).

Positions 1-21 are cleaved as a signal peptide; it reads MSENKCPVMHGSATTTENSMA. The segment at residues 94-222 is a cross-link (tryptophyl-tyrosyl-methioninium (Trp-Tyr) (with M-248)); the sequence is WHAAGTYRIA…LAAVMMGLIY (129 aa). Catalysis depends on His-95, which acts as the Proton acceptor. The segment at residues 222–248 is a cross-link (tryptophyl-tyrosyl-methioninium (Tyr-Met) (with W-94)); the sequence is YVNPEGVDGKPDPLKTAQDIRETFARM. Heme b is bound at residue His-263.

This sequence belongs to the peroxidase family. Peroxidase/catalase subfamily. Homodimer or homotetramer. Heme b serves as cofactor. In terms of processing, formation of the three residue Trp-Tyr-Met cross-link is important for the catalase, but not the peroxidase activity of the enzyme.

The catalysed reaction is H2O2 + AH2 = A + 2 H2O. The enzyme catalyses 2 H2O2 = O2 + 2 H2O. Its function is as follows. Bifunctional enzyme with both catalase and broad-spectrum peroxidase activity. The sequence is that of Catalase-peroxidase from Shewanella denitrificans (strain OS217 / ATCC BAA-1090 / DSM 15013).